Consider the following 98-residue polypeptide: Large ribosomal subunit protein bL27 (98 aa).

A disordered region spans residues 1–22 (MAHKKGTGSTRNGRDSNAQRLG). Residues 7-19 (TGSTRNGRDSNAQ) show a composition bias toward polar residues.

This sequence belongs to the bacterial ribosomal protein bL27 family.

The polypeptide is Large ribosomal subunit protein bL27 (Nostoc punctiforme (strain ATCC 29133 / PCC 73102)).